The primary structure comprises 206 residues: Small ribosomal subunit protein uS7 (206 aa).

Residues 1-19 show a composition bias toward acidic residues; that stretch reads MSAEDTPEADADAAEESEP. A disordered region spans residues 1–25; sequence MSAEDTPEADADAAEESEPETARAK. Position 2 is an N-acetylserine (serine 2).

This sequence belongs to the universal ribosomal protein uS7 family. As to quaternary structure, part of the 30S ribosomal subunit.

In terms of biological role, one of the primary rRNA binding proteins, it binds directly to 16S rRNA where it nucleates assembly of the head domain of the 30S subunit. Is located at the subunit interface close to the decoding center. The sequence is that of Small ribosomal subunit protein uS7 from Haloarcula marismortui (strain ATCC 43049 / DSM 3752 / JCM 8966 / VKM B-1809) (Halobacterium marismortui).